Reading from the N-terminus, the 199-residue chain is uncharacterized protein (199 aa).

The first 28 residues, 1-28, serve as a signal peptide directing secretion; it reads MKKLATVGSLIVTSTLVFSSMPFQNAHA.

Its subcellular location is the secreted. This is an uncharacterized protein from Staphylococcus aureus (strain NCTC 8325 / PS 47).